Here is a 355-residue protein sequence, read N- to C-terminus: MESPIRTARRTLPLLIGATCLVLALTGCAGEDGPAQARPTPSASTSPKQAPALSAAQARDVITRYSKINNEANADLDRRQLDTVEDGPLYAMSVSDYTETEGLPAKDREPYKRWSYDLASAKLYIPRLAAGQERWFAAALSSEKGKAPSRLAVFAELPRHKRWEMVSVVDLDSQKLPDVALDREGYATAVPANDNKHLAADANLLRTAVLDNFATGGTNTGTKVFAPTKASKRQIKVHSDAATRFGDKGTSVFDGADNRFTDAYALKTADGGALILFSHTHTQTDAVAHSGLQINPGKDDRAWLHDVPRTSITYTFICNDAATVPAKSQPSRLIGYTCARTNASGPPLPSWTARA.

Residues 1 to 27 (MESPIRTARRTLPLLIGATCLVLALTG) form the signal peptide. Cysteine 28 is lipidated: N-palmitoyl cysteine. A lipid anchor (S-diacylglycerol cysteine) is attached at cysteine 28. Residues 33-53 (GPAQARPTPSASTSPKQAPAL) are disordered. The segment covering 39–48 (PTPSASTSPK) has biased composition (polar residues).

It is found in the cell membrane. This is an uncharacterized protein from Streptomyces coelicolor (strain ATCC BAA-471 / A3(2) / M145).